A 100-amino-acid polypeptide reads, in one-letter code: Small ribosomal subunit protein uS14c (100 aa).

The protein belongs to the universal ribosomal protein uS14 family. Part of the 30S ribosomal subunit.

It localises to the plastid. It is found in the chloroplast. Binds 16S rRNA, required for the assembly of 30S particles. The polypeptide is Small ribosomal subunit protein uS14c (Vitis vinifera (Grape)).